The sequence spans 172 residues: Large ribosomal subunit protein uL10 (172 aa).

Belongs to the universal ribosomal protein uL10 family. Part of the ribosomal stalk of the 50S ribosomal subunit. The N-terminus interacts with L11 and the large rRNA to form the base of the stalk. The C-terminus forms an elongated spine to which L12 dimers bind in a sequential fashion forming a multimeric L10(L12)X complex.

Forms part of the ribosomal stalk, playing a central role in the interaction of the ribosome with GTP-bound translation factors. This Caulobacter sp. (strain K31) protein is Large ribosomal subunit protein uL10.